Consider the following 443-residue polypeptide: ATP-dependent protease ATPase subunit HslU (443 aa).

ATP contacts are provided by residues Val18 and 60–65 (GVGKTE). The tract at residues 136-158 (LPPPRDFNEDSQRTNADSSTRQL) is disordered. The span at 148–157 (RTNADSSTRQ) shows a compositional bias: polar residues. ATP contacts are provided by Asp256, Glu321, and Arg393.

It belongs to the ClpX chaperone family. HslU subfamily. A double ring-shaped homohexamer of HslV is capped on each side by a ring-shaped HslU homohexamer. The assembly of the HslU/HslV complex is dependent on binding of ATP.

It localises to the cytoplasm. In terms of biological role, ATPase subunit of a proteasome-like degradation complex; this subunit has chaperone activity. The binding of ATP and its subsequent hydrolysis by HslU are essential for unfolding of protein substrates subsequently hydrolyzed by HslV. HslU recognizes the N-terminal part of its protein substrates and unfolds these before they are guided to HslV for hydrolysis. The chain is ATP-dependent protease ATPase subunit HslU from Marinobacter nauticus (strain ATCC 700491 / DSM 11845 / VT8) (Marinobacter aquaeolei).